A 2451-amino-acid chain; its full sequence is Reducing polyketide synthase 8 (2451 aa).

The region spanning N12–A434 is the Ketosynthase family 3 (KS3) domain. Active-site for beta-ketoacyl synthase activity residues include C174, H313, and H354. In terms of domain architecture, Malonyl-CoA:ACP transacylase (MAT) spans V538 to M846. Positions H940 to P1085 are N-terminal hotdog fold. In terms of domain architecture, PKS/mFAS DH spans H940–S1254. H974 acts as the Proton acceptor; for dehydratase activity in catalysis. The C-terminal hotdog fold stretch occupies residues L1100–S1254. The active-site Proton donor; for dehydratase activity is the D1160. The tract at residues L1294–Q1590 is methyltransfrase (MT) domain. In terms of domain architecture, Ketoreductase (KR) spans T2088–V2266. The Carrier domain maps to D2366–A2451. S2404 is modified (O-(pantetheine 4'-phosphoryl)serine).

It depends on pantetheine 4'-phosphate as a cofactor.

Its pathway is secondary metabolite biosynthesis. Reducing polyketide synthase; part of the gene cluster that mediates the biosynthesis of fusamarins, isocoumarin derivatives that show moderate cytotoxicity with IC(50) values between 1 and 50 uM. The polyketide synthase FMN1 probably synthesizes two different polyketides, a tetra- and a pentaketide, containinga varying number of double bonds depending on the selective actions of the trans-enoyl reductase FMN2. Chain fusion will presumably be mediated by the KS domain before finally offloading is catalyzed by the alpha/beta hydrolase fold enzyme FMN3. In Fusarium mangiferae (Mango malformation disease fungus), this protein is Reducing polyketide synthase 8.